The sequence spans 299 residues: Meso-diaminopimelate D-dehydrogenase (299 aa).

NADP(+) contacts are provided by residues 11–14 (YGNI), R36, 67–70 (CTPT), 90–92 (SFD), and 119–123 (AGWDP). Substrate is bound by residues D92, D122, F146, 152 to 153 (MG), T171, R181, H227, and N253.

It belongs to the diaminopimelate dehydrogenase family. Homodimer.

The catalysed reaction is meso-2,6-diaminopimelate + NADP(+) + H2O = (S)-2-amino-6-oxoheptanedioate + NH4(+) + NADPH + H(+). It functions in the pathway amino-acid biosynthesis; L-lysine biosynthesis via DAP pathway; DL-2,6-diaminopimelate from (S)-tetrahydrodipicolinate: step 1/1. Functionally, catalyzes the reversible NADPH-dependent reductive amination of L-2-amino-6-oxopimelate, the acyclic form of L-tetrahydrodipicolinate, to generate the meso compound, D,L-2,6-diaminopimelate. Probably plays a role in lysine biosynthesis. Exhibits a high substrate specificity for meso-2,6-diaminopimelate (m-DAP), since the activity with L,L-2,6-diaminopimelate is less than 5% of the activity observed with m-DAP. Can use NAD(+) only very poorly since the activity observed in the presence of NAD(+) is about 14% of that with NADP(+). The polypeptide is Meso-diaminopimelate D-dehydrogenase (ddh) (Bacteroides fragilis (strain ATCC 25285 / DSM 2151 / CCUG 4856 / JCM 11019 / LMG 10263 / NCTC 9343 / Onslow / VPI 2553 / EN-2)).